The following is a 280-amino-acid chain: MSFRLDAASVSYANGQRALSQITLAASRGEPIAVIGPSGAGKTSLLRLLATSLRPSEGRVEVLEQSPWAVSAARLQQLRCRIGMVHQAPPMPPRQRVVTAILAGRLGIWPAWKSLLSLVYPADIDGAGEQLARLELADRLFDRCDQLSGGQLQRVGVARVLYQRPELILADEPVSAMDPVLANLTLGELRREADTRAVPLVASLHAVDLALRWFPRIVGLKAGEIAFDLPAERVTDALLRELYASESASPPVQGSQALTSIAAGASAAIGGDTQPRPACR.

Residues 3-247 (FRLDAASVSY…LLRELYASES (245 aa)) enclose the ABC transporter domain. An ATP-binding site is contributed by 36–43 (GPSGAGKT).

Belongs to the ABC transporter superfamily. Phosphonates importer (TC 3.A.1.9.1) family. The complex is composed of two ATP-binding proteins (PhnC), two transmembrane proteins (PhnE) and a solute-binding protein (PhnD).

It localises to the cell inner membrane. It carries out the reaction phosphonate(out) + ATP + H2O = phosphonate(in) + ADP + phosphate + H(+). Its function is as follows. Part of the ABC transporter complex PhnCDE involved in phosphonates import. Responsible for energy coupling to the transport system. This Cupriavidus necator (strain ATCC 17699 / DSM 428 / KCTC 22496 / NCIMB 10442 / H16 / Stanier 337) (Ralstonia eutropha) protein is Phosphonates import ATP-binding protein PhnC 1.